Here is a 196-residue protein sequence, read N- to C-terminus: Carnitine operon protein CaiE (196 aa).

Residues 174–196 (QPLRQMEENRPRLQGTTDVTPKR) are disordered. Residues 187–196 (QGTTDVTPKR) are compositionally biased toward polar residues.

This sequence belongs to the transferase hexapeptide repeat family.

Its pathway is amine and polyamine metabolism; carnitine metabolism. Its function is as follows. Overproduction of CaiE stimulates the activity of CaiB and CaiD. This chain is Carnitine operon protein CaiE (caiE), found in Escherichia coli (strain K12).